A 429-amino-acid polypeptide reads, in one-letter code: Enolase (429 aa).

Residue Gln167 participates in (2R)-2-phosphoglycerate binding. Glu209 serves as the catalytic Proton donor. 3 residues coordinate Mg(2+): Asp246, Glu289, and Asp316. The (2R)-2-phosphoglycerate site is built by Lys341, Arg370, Ser371, and Lys392. Lys341 acts as the Proton acceptor in catalysis.

Belongs to the enolase family. As to quaternary structure, component of the RNA degradosome, a multiprotein complex involved in RNA processing and mRNA degradation. Requires Mg(2+) as cofactor.

The protein localises to the cytoplasm. It localises to the secreted. Its subcellular location is the cell surface. The catalysed reaction is (2R)-2-phosphoglycerate = phosphoenolpyruvate + H2O. It participates in carbohydrate degradation; glycolysis; pyruvate from D-glyceraldehyde 3-phosphate: step 4/5. In terms of biological role, catalyzes the reversible conversion of 2-phosphoglycerate (2-PG) into phosphoenolpyruvate (PEP). It is essential for the degradation of carbohydrates via glycolysis. This chain is Enolase, found in Pseudomonas entomophila (strain L48).